The chain runs to 431 residues: MPAIVLIGAQWGDEGKGKATDLLGGRVQWVVRYQGGNNAGHTVVLPTGENFALHLIPSGILTPGVTNVIGNGVVVDPGVLLAELKGLEERGVDTERLLISADAHLLMPYHVAIDKVVERYAGSKKIGTTGRGIGPCYQDKIARQGIRVADVLDPALLAEKIEGALELKNQVLVKIYNRKALDPAEVVENLLEQADGFKHRIADARLLLNEALERNETVLLEGSQGTLLDVDHGTYPFVTSSNPTAGGASVGSGIGPTRITTVLGILKAYTTRVGSGPFPTELFDDHGAYLAKTGGEVGVTTGRARRCGWFDAVIARYATRVNGITDYFLTKLDVLSSLETVPICVGYSVDGKRTDEMPMTQSDIARAEPIYEELPGWWEDISGCRTFDELPAKARDYVLRLEDLAGAHVSCIGVGPGRDQTIVRRDVLAAR.

GTP contacts are provided by residues 12 to 18 (GDEGKGK) and 40 to 42 (GHT). The Proton acceptor role is filled by Asp13. Mg(2+) is bound by residues Asp13 and Gly40. IMP contacts are provided by residues 13 to 16 (DEGK), 38 to 41 (NAGH), Thr129, Arg143, Gln224, Thr239, and Arg303. His41 (proton donor) is an active-site residue. 299–305 (VTTGRAR) is a substrate binding site. GTP is bound by residues Arg305, 331–333 (KLD), and 413–415 (GVG).

This sequence belongs to the adenylosuccinate synthetase family. In terms of assembly, homodimer. The cofactor is Mg(2+).

The protein localises to the cytoplasm. The catalysed reaction is IMP + L-aspartate + GTP = N(6)-(1,2-dicarboxyethyl)-AMP + GDP + phosphate + 2 H(+). The protein operates within purine metabolism; AMP biosynthesis via de novo pathway; AMP from IMP: step 1/2. Functionally, plays an important role in the de novo pathway of purine nucleotide biosynthesis. Catalyzes the first committed step in the biosynthesis of AMP from IMP. The chain is Adenylosuccinate synthetase from Mycolicibacterium vanbaalenii (strain DSM 7251 / JCM 13017 / BCRC 16820 / KCTC 9966 / NRRL B-24157 / PYR-1) (Mycobacterium vanbaalenii).